The following is a 586-amino-acid chain: Putative butyrophilin subfamily 2 member A3 (586 aa).

The signal sequence occupies residues Met1–Ala27. The Ig-like V-type domain maps to Gln28–Val139. Residues Gln28–Val246 lie on the Extracellular side of the membrane. N-linked (GlcNAc...) asparagine glycosylation is found at Asn45, Asn112, Asn214, and Asn220. Cys50 and Cys123 are oxidised to a cystine. The chain crosses the membrane as a helical span at residues Val247–Ile267. At Asn268–Val586 the chain is on the cytoplasmic side. Residues Thr281–Ala474 enclose the B30.2/SPRY domain.

The protein belongs to the immunoglobulin superfamily. BTN/MOG family.

The protein resides in the membrane. This chain is Putative butyrophilin subfamily 2 member A3 (BTN2A3P), found in Homo sapiens (Human).